A 728-amino-acid chain; its full sequence is Dynamin-like protein 1 (728 aa).

Positions 1 to 119 are assembly domain, required for tetramerization; the sequence is MKELFQKIWQ…ILQEKVQSID (119 aa). The Dynamin-type G domain maps to 159–442; sequence QNLEFNIAIT…LYAGEKSKIA (284 aa). The tract at residues 169–176 is G1 motif; sequence GVMNAGKS. 171-177 lines the GDP pocket; it reads MNAGKSS. Positions 195-196 are G2 motif; it reads ET. Positions 298–301 are G3 motif; it reads DTPG. Residues 358–361 form a G4 motif region; sequence TKAD. Lysine 359 is a GDP binding site. A region of interest (G5 motif) is located at residue glutamate 388. 400–402 serves as a coordination point for GDP; sequence SAK. Residues 470–695 are required for liposome binding but not for tetramerization; it reads ENKQGVSEEN…LESLEKVLQS (226 aa).

It belongs to the TRAFAC class dynamin-like GTPase superfamily. Dynamin/Fzo/YdjA family. As to quaternary structure, forms a 2:2 heterotetramer with DLP1. DLP2 forms a central back-to-back dimer flanked on each side by a DLP1 subunit. In the crystal structures the 2 DLP1 subunits are in very different conformations.

The protein resides in the cytoplasm. The protein localises to the cytosol. It catalyses the reaction GTP + H2O = GDP + phosphate + H(+). Its function is as follows. The heterotetrameric DLP1(2)-DLP2(2) complex tethers liposomes and may mediate their fusion. Initial binding is probably mediated by DLP1, while DLP2 couples DLP1 subunits and increases the effective reach of the complex up to 45 nm. The role of the nucleotide is unknown. This subunit alone weakly binds to liposomes; GTP, GDP, GMPPCP and GMPPNP do not change heterotetramer binding. Tetramerization is required for GTPase activity, suggesting the GTPase domains (dynamin-type G) from DLP1 and DLP2 must dimerize to reconstitute the GTPase active site. The protein is Dynamin-like protein 1 of Campylobacter jejuni subsp. jejuni serotype O:23/36 (strain 81-176).